Here is a 300-residue protein sequence, read N- to C-terminus: Cation-efflux pump FieF (300 aa).

The helical transmembrane segment at 24 to 44 (LLIKILAWWYTGSVSILAALV) threads the bilayer. Zn(2+)-binding residues include aspartate 45 and aspartate 49. 2 helical membrane passes run 82–102 (AALA…LTSI) and 114–134 (PGVG…LVTF). Residues histidine 153 and aspartate 157 each coordinate Zn(2+). The next 2 membrane-spanning stretches (helical) occupy residues 156–176 (SDVM…YGWH) and 178–198 (ADAL…LRMG).

Belongs to the cation diffusion facilitator (CDF) transporter (TC 2.A.4) family. FieF subfamily. In terms of assembly, homodimer.

It is found in the cell inner membrane. The catalysed reaction is Zn(2+)(in) + H(+)(out) = Zn(2+)(out) + H(+)(in). It carries out the reaction Cd(2+)(in) + H(+)(out) = Cd(2+)(out) + H(+)(in). It catalyses the reaction Fe(2+)(in) + H(+)(out) = Fe(2+)(out) + H(+)(in). Functionally, divalent metal cation transporter which exports Zn(2+), Cd(2+) and possibly Fe(2+). May be involved in zinc and iron detoxification by efflux. The chain is Cation-efflux pump FieF from Salmonella agona (strain SL483).